The following is a 217-amino-acid chain: MYGVSMDPKCSLILLSGGKGERFGANQPKQYLPFRGEPLILHALNMALRIPEISEIIVVCDVNYESIFEGYPVKFARPGTRRQDSVFSGLQQVANPWVLVHDGVRPFIYPDEVTELVTAAYQTGAATLVSNVPYTIKQRDPVKTLDRDALSIVHTPQCIKTQILLEGLERANQERITLVDDTQAAELLNLPVALVFNKHPQIKVTYPEDLTLAHALL.

The protein belongs to the IspD/TarI cytidylyltransferase family. IspD subfamily.

The enzyme catalyses 2-C-methyl-D-erythritol 4-phosphate + CTP + H(+) = 4-CDP-2-C-methyl-D-erythritol + diphosphate. Its pathway is isoprenoid biosynthesis; isopentenyl diphosphate biosynthesis via DXP pathway; isopentenyl diphosphate from 1-deoxy-D-xylulose 5-phosphate: step 2/6. In terms of biological role, catalyzes the formation of 4-diphosphocytidyl-2-C-methyl-D-erythritol from CTP and 2-C-methyl-D-erythritol 4-phosphate (MEP). In Chlamydia abortus (strain DSM 27085 / S26/3) (Chlamydophila abortus), this protein is 2-C-methyl-D-erythritol 4-phosphate cytidylyltransferase.